The sequence spans 195 residues: MIDNNKHNQDINASSANTIKKDELSESACKIDSIIDPKDDQIIQLQIQLAQIKEHERNTILRLKAEIENIQRRNIQEIEKAHKFALDRFVSELLPVIDNLERTLGIIDRSNTTLSAIIEGIDLTLKSFLDTVYKFGVKSIHEIHIPFNPEIHQAISTMESEKYESNQVLTIVQKGYSLNGRLVRPAMVIVAKSKS.

This sequence belongs to the GrpE family. In terms of assembly, homodimer.

Its subcellular location is the cytoplasm. Participates actively in the response to hyperosmotic and heat shock by preventing the aggregation of stress-denatured proteins, in association with DnaK and GrpE. It is the nucleotide exchange factor for DnaK and may function as a thermosensor. Unfolded proteins bind initially to DnaJ; upon interaction with the DnaJ-bound protein, DnaK hydrolyzes its bound ATP, resulting in the formation of a stable complex. GrpE releases ADP from DnaK; ATP binding to DnaK triggers the release of the substrate protein, thus completing the reaction cycle. Several rounds of ATP-dependent interactions between DnaJ, DnaK and GrpE are required for fully efficient folding. This Blochmanniella floridana protein is Protein GrpE.